The following is a 125-amino-acid chain: RxLR effector protein Avh6 (125 aa).

A signal peptide spans 1–25 (MRLSSTTFVVLAAVLLASGTAVSKA). The RxLR-dEER motif lies at 48 to 70 (RFLRSHHTEDGEAKLSNYDNEER).

It belongs to the RxLR effector family.

It localises to the secreted. Its subcellular location is the host cell. Its function is as follows. Effector that suppresses plant defense responses during the early stages of pathogen infection. Suppresses cell death induced by effectors and PAMPs in plant hosts. Triggers a hypersensitive response (HR) in the presence of Rps1d. Suppresses BAX-induced cell death and enhan,ced P.capsici infection in Nicotiana benthamiana. Also suppresses effector-triggered immunity induction by associating with Avr1b and Rps1b, suggesting a role in suppressing plant immunity. The sequence is that of RxLR effector protein Avh6 from Phytophthora sojae (strain P6497) (Soybean stem and root rot agent).